The sequence spans 115 residues: Thionin-like protein 2 (115 aa).

The first 20 residues, 1-20 (MLVAVMIVMVIGNLLAQTAA), serve as a signal peptide directing secretion.

The protein belongs to the plant thionin (TC 1.C.44) family. In terms of processing, is disulfide-linked.

Its subcellular location is the secreted. Functionally, may be involved in plant defense. In Arabidopsis thaliana (Mouse-ear cress), this protein is Thionin-like protein 2.